The primary structure comprises 102 residues: Small ribosomal subunit protein uS10 (102 aa).

Belongs to the universal ribosomal protein uS10 family. As to quaternary structure, part of the 30S ribosomal subunit.

Functionally, involved in the binding of tRNA to the ribosomes. This chain is Small ribosomal subunit protein uS10, found in Treponema pallidum (strain Nichols).